We begin with the raw amino-acid sequence, 481 residues long: MQLFYVPLLSLFVLFVSLSFYFLFYKSKSGSTSGLPLPPGKTGWPVIGESFEFLSTGWKGYPEKFIFDRLAKYSSNVFKTSLFGQPAAAFCGAACNKFLFSNENKLVQAWWPDSVNKVFPSSTQTSSKEEAIKMRKLLPNFLKPEALQRYVGVMDQIATKHFKSGWENKKEVLVFPLAKNYTFWIACKVFVSVEEPTQVAKLLEPFNAIASGIISVPIDLPGTPFNSAIKSSKIVRDKLMGIIKQRKTDLGEGKASPTQDILSHMLLTSDENGKFMTEGDIADKILGLLIGGHDTASSACTFVVKFLAELPEIYEGVYKEQMEIAKSKKAGELLNWEDIQKMKYSWNVACEVLRLAPPLQGAFREALTDFSYNGFSIPKGWKLYWSANSTHRNSEVFPEPLKFDPSRFEGAGPPPYSFVPFGGGPRMCPGKEYARLEILVFMHHVVKRFKWEKVIPDEKIVVNPMPIPAKGLPVRLFPHKA.

Residues 4–24 (FYVPLLSLFVLFVSLSFYFLF) traverse the membrane as a helical segment. Heme is bound at residue C428.

This sequence belongs to the cytochrome P450 family. The cofactor is heme.

It localises to the membrane. It carries out the reaction beta-amyrin + 3 reduced [NADPH--hemoprotein reductase] + 3 O2 = oleanolate + 3 oxidized [NADPH--hemoprotein reductase] + 4 H2O + 4 H(+). Catalyzes the oxidation of the methyl group to a carboxyl group at the C-28 position of beta-amyrin to form oleanolate. This is Beta-amyrin 28-monooxygenase from Kalopanax septemlobus (Castor aralia).